The chain runs to 115 residues: Probable non-functional T cell receptor beta variable 7-1 (115 aa).

The signal sequence occupies residues 1 to 21; that stretch reads MGTRLLCWAAICLLGADHTGA. The region spanning 22-115 is the Ig-like domain; it reads GVSQSLRHKV…LAVYLCASSS (94 aa).

As to quaternary structure, most probably, the alpha-beta TR is not assembled due to incorrect folding of the beta chain. Alpha-beta TR is a heterodimer composed of an alpha and beta chain; disulfide-linked. The alpha-beta TR is associated with the transmembrane signaling CD3 coreceptor proteins to form the TR-CD3 (TcR or TCR). The assembly of alpha-beta TR heterodimers with CD3 occurs in the endoplasmic reticulum where a single alpha-beta TR heterodimer associates with one CD3D-CD3E heterodimer, one CD3G-CD3E heterodimer and one CD247 homodimer forming a stable octameric structure. CD3D-CD3E and CD3G-CD3E heterodimers preferentially associate with TR alpha and TR beta chains, respectively. The association of the CD247 homodimer is the last step of TcR assembly in the endoplasmic reticulum and is required for transport to the cell surface.

The protein localises to the cell membrane. Its function is as follows. Probable non-functional open reading frame (ORF) of V region of the variable domain of T cell receptor (TR) beta chain. Non-functional ORF generally cannot participate in the synthesis of a productive T cell receptor (TR) chain due to altered V-(D)-J or switch recombination and/or splicing site (at mRNA level) and/or conserved amino acid change (protein level). Alpha-beta T cell receptors are antigen specific receptors which are essential to the immune response and are present on the cell surface of T lymphocytes. Recognize peptide-major histocompatibility (MH) (pMH) complexes that are displayed by antigen presenting cells (APC), a prerequisite for efficient T cell adaptive immunity against pathogens. Binding of alpha-beta TR to pMH complex initiates TR-CD3 clustering on the cell surface and intracellular activation of LCK that phosphorylates the ITAM motifs of CD3G, CD3D, CD3E and CD247 enabling the recruitment of ZAP70. In turn ZAP70 phosphorylates LAT, which recruits numerous signaling molecules to form the LAT signalosome. The LAT signalosome propagates signal branching to three major signaling pathways, the calcium, the mitogen-activated protein kinase (MAPK) kinase and the nuclear factor NF-kappa-B (NF-kB) pathways, leading to the mobilization of transcription factors that are critical for gene expression and essential for T cell growth and differentiation. The T cell repertoire is generated in the thymus, by V-(D)-J rearrangement. This repertoire is then shaped by intrathymic selection events to generate a peripheral T cell pool of self-MH restricted, non-autoaggressive T cells. Post-thymic interaction of alpha-beta TR with the pMH complexes shapes TR structural and functional avidity. The protein is Probable non-functional T cell receptor beta variable 7-1 of Homo sapiens (Human).